Here is a 310-residue protein sequence, read N- to C-terminus: Cytochrome f (310 aa).

The first 23 residues, 1 to 23 (MRRLIPILLGSLVLSLSILVAPA), serve as a signal peptide directing secretion. Heme-binding residues include Y28, C48, C51, and H52. A helical membrane pass occupies residues 277–297 (IYGLLAFFVAVSLAQILLVLK).

This sequence belongs to the cytochrome f family. As to quaternary structure, the 4 large subunits of the cytochrome b6-f complex are cytochrome b6, subunit IV (17 kDa polypeptide, PetD), cytochrome f and the Rieske protein, while the 4 small subunits are PetG, PetL, PetM and PetN. The complex functions as a dimer. Requires heme as cofactor.

It localises to the cellular thylakoid membrane. Component of the cytochrome b6-f complex, which mediates electron transfer between photosystem II (PSII) and photosystem I (PSI), cyclic electron flow around PSI, and state transitions. This is Cytochrome f from Prochlorococcus marinus (strain MIT 9313).